We begin with the raw amino-acid sequence, 498 residues long: ADP,ATP carrier protein 1 (498 aa).

Residues 1-33 are Cytoplasmic-facing; sequence MSTSKSENYLSELRKIIWPIEQHENKKFLPLAF. A helical transmembrane segment spans residues 34–54; that stretch reads MMFCILLNYSTLRSIKDGFVV. C37 and C85 form a disulfide bridge. At 55-67 the chain is on the extracellular side; it reads TDIGTESISFLKT. Residues 68–88 traverse the membrane as a helical segment; sequence YIVLPSAVIAMVIYVKLCDIL. Topologically, residues 89-92 are cytoplasmic; that stretch reads KQEN. The helical transmembrane segment at 93-113 threads the bilayer; that stretch reads IFYVITSFFLGYFALFAFVLY. Over 114–147 the chain is Extracellular; that stretch reads PYPDLVHPDHKTIESLSLAYPNFKWFIKIVGKWS. A helical membrane pass occupies residues 148–168; it reads FASFYTIAELWGTMMLSLLFW. The Cytoplasmic portion of the chain corresponds to 169-184; the sequence is QFANQITKITEAKRFY. A helical transmembrane segment spans residues 185–205; it reads SMFGLLANLALPVTSVVIGYF. Topologically, residues 206–218 are extracellular; that stretch reads LHEKTQIVSEHLK. A helical transmembrane segment spans residues 219–239; it reads FIPLFVIMITSSFLIILTYRW. Residues 240-279 are Cytoplasmic-facing; that stretch reads MNKNVLTDPRLYDPTLVKEKKAKAKLSFIESFKMIFTSKY. A helical membrane pass occupies residues 280 to 300; the sequence is VGYIALLIIAYGVSVNLVEGV. Topologically, residues 301 to 320 are extracellular; it reads WKSKVKELYPTKEAYTIYMG. A helical transmembrane segment spans residues 321–341; sequence QFQFYQGWVAIAFMLIGSNIL. The Cytoplasmic segment spans residues 342 to 348; the sequence is RKVSWLT. Residues 349–369 form a helical membrane-spanning segment; that stretch reads AAMITPLMMFITGAAFFSFIF. At 370–379 the chain is on the extracellular side; that stretch reads FDSVIAMNLT. Residues 380–400 traverse the membrane as a helical segment; that stretch reads GILASSPLTLAVMFGMIQNVL. Topologically, residues 401-438 are cytoplasmic; the sequence is SKGVKYSLFDATKNMAYIPLDKDLRVKGQAAVEVIGGR. 436-442 contacts ATP; that stretch reads GGRLGKS. Residues 439–459 form a helical membrane-spanning segment; it reads LGKSGGAIIQSTFFILFPAFG. Residues 460–465 lie on the Extracellular side of the membrane; sequence FIEATP. Residues 466–486 form a helical membrane-spanning segment; the sequence is YFASIFFIIVILWIFAVKGLN. Topologically, residues 487–498 are cytoplasmic; the sequence is KEYQVLVNKNEN.

The protein belongs to the ADP/ATP translocase tlc family.

It localises to the cell membrane. Its function is as follows. Provides the rickettsial cell with host ATP in exchange for rickettsial ADP. This is an obligate exchange system. This energy acquiring activity is an important component of rickettsial parasitism. The polypeptide is ADP,ATP carrier protein 1 (tlcA) (Rickettsia typhi (strain ATCC VR-144 / Wilmington)).